The primary structure comprises 164 residues: Protein SprT (164 aa).

The 143-residue stretch at 14 to 156 folds into the SprT-like domain; it reads QQAETFFKRP…LCRRCREILV (143 aa). Histidine 69 provides a ligand contact to Zn(2+). The active site involves glutamate 70. Histidine 73 lines the Zn(2+) pocket.

Belongs to the SprT family. The cofactor is Zn(2+).

Its subcellular location is the cytoplasm. In Pseudomonas entomophila (strain L48), this protein is Protein SprT.